The sequence spans 934 residues: Serine/threonine-protein kinase KIPK1 (934 aa).

Disordered regions lie at residues Leu20–Val40, Arg70–Gly113, Pro189–Gln227, Ser305–Gln343, Ser395–Val438, and Glu466–Arg493. 2 stretches are compositionally biased toward polar residues: residues Ser82–Ser94 and Asn212–Gln227. The span at Ser395–Asn421 shows a compositional bias: polar residues. The 342-residue stretch at Phe538–Phe879 folds into the Protein kinase domain. Residues Leu544 to Val552 and Lys567 each bind ATP. Asp663 (proton acceptor) is an active-site residue. The tract at residues Ser738–Glu773 is disordered. Residues Lys755–Leu764 show a composition bias toward polar residues.

The protein belongs to the protein kinase superfamily. Ser/Thr protein kinase family. In terms of assembly, interacts with KCBP. Interacts with PERK8, PERK9, PERK10 and PERK13. In terms of processing, autophosphorylated. In terms of tissue distribution, expressed in roots, cauline leaves, flowers and siliques.

The protein localises to the cytoplasm. It localises to the nucleus. The catalysed reaction is L-seryl-[protein] + ATP = O-phospho-L-seryl-[protein] + ADP + H(+). It catalyses the reaction L-threonyl-[protein] + ATP = O-phospho-L-threonyl-[protein] + ADP + H(+). Its function is as follows. Could be involved in the negative regulation of root growth. This Arabidopsis thaliana (Mouse-ear cress) protein is Serine/threonine-protein kinase KIPK1.